The chain runs to 292 residues: Coatomer subunit epsilon (292 aa).

The protein belongs to the COPE family. In terms of assembly, oligomeric complex that consists of at least the alpha, beta, beta', gamma, delta, epsilon and zeta subunits.

Its subcellular location is the cytoplasm. It is found in the golgi apparatus membrane. The protein localises to the cytoplasmic vesicle. It localises to the COPI-coated vesicle membrane. In terms of biological role, the coatomer is a cytosolic protein complex that binds to dilysine motifs and reversibly associates with Golgi non-clathrin-coated vesicles, which further mediate biosynthetic protein transport from the ER, via the Golgi up to the trans Golgi network. The coatomer complex is required for budding from Golgi membranes, and is essential for the retrograde Golgi-to-ER transport of dilysine-tagged proteins. In Caenorhabditis elegans, this protein is Coatomer subunit epsilon (cope-1).